A 309-amino-acid polypeptide reads, in one-letter code: Probable manganese-dependent inorganic pyrophosphatase (309 aa).

Mn(2+) is bound by residues histidine 9, aspartate 13, aspartate 15, aspartate 75, histidine 97, and aspartate 149.

The protein belongs to the PPase class C family. The cofactor is Mn(2+).

The protein resides in the cytoplasm. It catalyses the reaction diphosphate + H2O = 2 phosphate + H(+). The polypeptide is Probable manganese-dependent inorganic pyrophosphatase (Staphylococcus aureus (strain COL)).